A 465-amino-acid chain; its full sequence is Solute carrier family 7 member 12 (465 aa).

Residues 1-6 lie on the Cytoplasmic side of the membrane; the sequence is MQLLRA. A helical membrane pass occupies residues 7-27; that stretch reads LGVFHVSMILFSATLGTGIFV. The Extracellular portion of the chain corresponds to 28–39; it reads TPKAVLKYSSLN. Residues 40-60 form a helical membrane-spanning segment; it reads IPVSLSIWAGCGLLSIMSALC. Over 61 to 81 the chain is Cytoplasmic; it reads NAEIATTYPLSGASYYFLKRT. Residues 82–102 form a helical membrane-spanning segment; that stretch reads LGSSVAFLSLWIKLFAHFLGI. Topologically, residues 103 to 132 are extracellular; that stretch reads GAQCLLIATSVIQCFYSGCPAPELPTKCLA. A helical transmembrane segment spans residues 133 to 153; sequence LAILWSFGIVSARGIKTVAWF. Position 154 (N154) is a topological domain, cytoplasmic. Residues 155–175 traverse the membrane as a helical segment; sequence TVSSFIKLSVLCLISLTVLLV. Topologically, residues 176 to 202 are extracellular; sequence NGKKENVSRFENALDAELPNASQIADA. The helical transmembrane segment at 203–223 threads the bilayer; that stretch reads ILQVSYSYLGSSVLIVIAGEI. The Cytoplasmic portion of the chain corresponds to 224-234; sequence KRPTETIPKTL. The helical transmembrane segment at 235 to 255 threads the bilayer; sequence IYGISIVTVLYLLTNISYLAV. Topologically, residues 256-280 are extracellular; sequence LTSQEIIFSDSVGVTWMNRVFPSIQ. Residues 281 to 301 traverse the membrane as a helical segment; sequence WISSFLISAFLLGSVSCGIVS. The Cytoplasmic segment spans residues 302–327; the sequence is ASRVFYSASQEGEFPSIYSMLNDHHS. The chain crosses the membrane as a helical span at residues 328 to 351; it reads PAVADIQIVILSSVAIISSSIIYL. At 352–356 the chain is on the extracellular side; that stretch reads VKYVS. Residues 357 to 375 form a helical membrane-spanning segment; it reads LGSFCINLLQMIGLLKIRY. At 376-386 the chain is on the cytoplasmic side; it reads QNPDIPRPYKV. The chain crosses the membrane as a helical span at residues 387–407; it reads WLPFIFGSIALSLFLIFTPVI. Over 408 to 409 the chain is Extracellular; that stretch reads QS. A helical transmembrane segment spans residues 410–430; that stretch reads PSIEHVYQVVFLFCGFLCYWL. Over 431–465 the chain is Cytoplasmic; it reads QANLNGHATCFDTITCYCQLLFNISPSEDPEEQKN.

This sequence belongs to the amino acid-polyamine-organocation (APC) superfamily. Probably forms multimers, perhaps with an unknown protein(s). Expressed in kidney and red blood cells (at protein level). Expressed in kidney along the collecting ducts in the cortex, outer and inner medulla. May be expressed in placenta, lungs, spleen and skeletal muscles.

It is found in the apical cell membrane. The protein localises to the basal cell membrane. The protein resides in the cytoplasm. Probably mediates sodium- and chloride-independent uptake of neutral amino acids. This chain is Solute carrier family 7 member 12, found in Mus musculus (Mouse).